The primary structure comprises 161 residues: Probable chemoreceptor glutamine deamidase CheD (161 aa).

It belongs to the CheD family.

It carries out the reaction L-glutaminyl-[protein] + H2O = L-glutamyl-[protein] + NH4(+). Its function is as follows. Probably deamidates glutamine residues to glutamate on methyl-accepting chemotaxis receptors (MCPs), playing an important role in chemotaxis. In Syntrophomonas wolfei subsp. wolfei (strain DSM 2245B / Goettingen), this protein is Probable chemoreceptor glutamine deamidase CheD.